The primary structure comprises 211 residues: Protein FAM167A (211 aa).

Disordered regions lie at residues 1 to 30 (MSVPQIQVEEVAGGEEGPAGTTPPPDDHLR) and 56 to 108 (EEQT…GKLE). Residues 120–153 (LRKELMEMRLQDQQLARQLMRLRSDIHKLKIEQT) are a coiled coil.

This sequence belongs to the FAM167 (SEC) family.

In Bos taurus (Bovine), this protein is Protein FAM167A (FAM167A).